Reading from the N-terminus, the 466-residue chain is ATP-dependent protease ATPase subunit HslU (466 aa).

ATP contacts are provided by residues isoleucine 18, 60–65 (GVGKTE), aspartate 279, glutamate 344, and arginine 416.

It belongs to the ClpX chaperone family. HslU subfamily. As to quaternary structure, a double ring-shaped homohexamer of HslV is capped on each side by a ring-shaped HslU homohexamer. The assembly of the HslU/HslV complex is dependent on binding of ATP.

It localises to the cytoplasm. Its function is as follows. ATPase subunit of a proteasome-like degradation complex; this subunit has chaperone activity. The binding of ATP and its subsequent hydrolysis by HslU are essential for unfolding of protein substrates subsequently hydrolyzed by HslV. HslU recognizes the N-terminal part of its protein substrates and unfolds these before they are guided to HslV for hydrolysis. The chain is ATP-dependent protease ATPase subunit HslU from Lactobacillus acidophilus (strain ATCC 700396 / NCK56 / N2 / NCFM).